The chain runs to 306 residues: Tyrosine recombinase XerC (306 aa).

A Core-binding (CB) domain is found at 2–81 (AKASAAIEEF…ALRQFYGFLV (80 aa)). The region spanning 102–283 (PLPKTLSHKE…DAARLVALVN (182 aa)) is the Tyr recombinase domain. Residues R146, K170, H235, R238, and H261 contribute to the active site. Y270 serves as the catalytic O-(3'-phospho-DNA)-tyrosine intermediate.

The protein belongs to the 'phage' integrase family. XerC subfamily. In terms of assembly, forms a cyclic heterotetrameric complex composed of two molecules of XerC and two molecules of XerD.

Its subcellular location is the cytoplasm. Functionally, site-specific tyrosine recombinase, which acts by catalyzing the cutting and rejoining of the recombining DNA molecules. The XerC-XerD complex is essential to convert dimers of the bacterial chromosome into monomers to permit their segregation at cell division. It also contributes to the segregational stability of plasmids. The sequence is that of Tyrosine recombinase XerC from Erythrobacter litoralis (strain HTCC2594).